We begin with the raw amino-acid sequence, 181 residues long: ATP-dependent protease subunit HslV (181 aa).

Thr-7 is an active-site residue. The Na(+) site is built by Ala-166, Cys-169, and Thr-172.

It belongs to the peptidase T1B family. HslV subfamily. As to quaternary structure, a double ring-shaped homohexamer of HslV is capped on each side by a ring-shaped HslU homohexamer. The assembly of the HslU/HslV complex is dependent on binding of ATP.

Its subcellular location is the cytoplasm. The catalysed reaction is ATP-dependent cleavage of peptide bonds with broad specificity.. Its activity is regulated as follows. Allosterically activated by HslU binding. Functionally, protease subunit of a proteasome-like degradation complex believed to be a general protein degrading machinery. This is ATP-dependent protease subunit HslV from Anaeromyxobacter dehalogenans (strain 2CP-C).